A 358-amino-acid chain; its full sequence is Methylthioribose-1-phosphate isomerase (358 aa).

An N-acetylmethionine modification is found at M1. Residue D248 is the Proton donor of the active site.

It belongs to the eIF-2B alpha/beta/delta subunits family. MtnA subfamily.

It localises to the cytoplasm. It is found in the nucleus. The enzyme catalyses 5-(methylsulfanyl)-alpha-D-ribose 1-phosphate = 5-(methylsulfanyl)-D-ribulose 1-phosphate. The protein operates within amino-acid biosynthesis; L-methionine biosynthesis via salvage pathway; L-methionine from S-methyl-5-thio-alpha-D-ribose 1-phosphate: step 1/6. Its function is as follows. Catalyzes the interconversion of methylthioribose-1-phosphate (MTR-1-P) into methylthioribulose-1-phosphate (MTRu-1-P). This Bos taurus (Bovine) protein is Methylthioribose-1-phosphate isomerase.